The sequence spans 805 residues: Replication restart protein PriA (805 aa).

Residues 1-110 (MNFAEVIVDV…QAMLPAALKA (110 aa)) form a 3'BD region. The interval 111–166 (KYEKELKIAHGADLPPQVERLFSETKTLLYSDIPDHETLKLIQRHVQKGDIDVTYK) is linker. The WH stretch occupies residues 167-253 (VAQKTNKKMV…KESYEEVYRD (87 aa)). One can recognise a Helicase ATP-binding domain in the interval 282–448 (TLDSDEHKVF…QKGVYELLSL (167 aa)). 295–302 (GVTGSGKT) contributes to the ATP binding site. Positions 391 to 394 (DEEH) match the DEAH box motif. 8 residues coordinate Zn(2+): Cys-510, Cys-513, Cys-519, Cys-522, Cys-537, Cys-540, Cys-550, and Cys-553. The 155-residue stretch at 545–699 (PVPHTCPECA…TFYQHEMAHR (155 aa)) folds into the Helicase C-terminal domain.

It belongs to the helicase family. PriA subfamily. In terms of assembly, monomer. Component of the replication restart primosome which assembles in this order; PriA, DnaD then DnaB. The preferred DNA substrate mimics an arrested DNA replication fork with unreplicated lagging strand. Interacts with DnaD but not DnaB. Interacts with SSB (sbbA) via the latter's 35 residue C-terminal tail which tethers PriA to ssDNA. Colocalizes with DNA pol III subunit gamma/tau (dnaX). May interact with RarA. It depends on Zn(2+) as a cofactor.

Its subcellular location is the cytoplasm. It is found in the nucleoid. It catalyses the reaction Couples ATP hydrolysis with the unwinding of duplex DNA by translocating in the 3'-5' direction.. The catalysed reaction is ATP + H2O = ADP + phosphate + H(+). Its function is as follows. Initiates the restart of stalled replication forks, which reloads the replicative helicase on sites other than the origin of replication. Recognizes and binds to abandoned replication forks and remodels them to uncover a helicase loading site. Promotes assembly of the primosome at these replication forks. Serves as the initiating protein for assembly of the replication restart primosome; binding of PriA to an arrested DNA replication fork with unreplicated lagging strand triggers assembly. Sequentially DnaD (possibly as a dimer) and DnaB homotetramers bind. Assembly probably continues by loading of the DnaC replicative helicase aided by helicase loader DnaI. A single-strand (ss)DNA-dependent ATPase with helicase activity. Recognizes and binds the arrested nascent DNA chain at stalled replication forks. Binds forked DNA substrates and makes a larger complex with RarA; RarA has no effect on the helicase function. Binds ssDNA, D-loops and replication fork-like substrates but not double-stranded (ds)DNA; the preferred DNA substrate mimics an arrested DNA replication fork with an unreplicated lagging strand. Recognizes nicked dsDNA. A supershift on ssDNA occurs in the presence of single-stranded binding protein (SSB). Cannot substitute for E.coli PriA. In terms of biological role, required for replication of plasmids that have a rolling circle mechanism, which produces circular single-stranded (ss)DNA intermediates corresponding to the lagging strand template, which are then converted into double-stranded (ds)DNA; priA is required to activate the conversion of ssDNA into dsDNA. This Bacillus subtilis (strain 168) protein is Replication restart protein PriA.